Consider the following 385-residue polypeptide: Succinyl-diaminopimelate desuccinylase (385 aa).

A Zn(2+)-binding site is contributed by His73. Residue Asp75 is part of the active site. Asp106 contacts Zn(2+). The active-site Proton acceptor is Glu141. Zn(2+)-binding residues include Glu142, Glu170, and His359.

This sequence belongs to the peptidase M20A family. DapE subfamily. As to quaternary structure, homodimer. Zn(2+) is required as a cofactor. Co(2+) serves as cofactor.

It catalyses the reaction N-succinyl-(2S,6S)-2,6-diaminopimelate + H2O = (2S,6S)-2,6-diaminopimelate + succinate. Its pathway is amino-acid biosynthesis; L-lysine biosynthesis via DAP pathway; LL-2,6-diaminopimelate from (S)-tetrahydrodipicolinate (succinylase route): step 3/3. In terms of biological role, catalyzes the hydrolysis of N-succinyl-L,L-diaminopimelic acid (SDAP), forming succinate and LL-2,6-diaminopimelate (DAP), an intermediate involved in the bacterial biosynthesis of lysine and meso-diaminopimelic acid, an essential component of bacterial cell walls. This is Succinyl-diaminopimelate desuccinylase from Methylorubrum extorquens (strain CM4 / NCIMB 13688) (Methylobacterium extorquens).